Reading from the N-terminus, the 272-residue chain is 3-methyl-2-oxobutanoate hydroxymethyltransferase (272 aa).

Asp-43 and Asp-82 together coordinate Mg(2+). 3-methyl-2-oxobutanoate-binding positions include 43–44 (DS), Asp-82, and Lys-112. Glu-114 is a binding site for Mg(2+). Glu-179 serves as the catalytic Proton acceptor.

Belongs to the PanB family. As to quaternary structure, homodecamer; pentamer of dimers. Mg(2+) serves as cofactor.

Its subcellular location is the cytoplasm. It carries out the reaction 3-methyl-2-oxobutanoate + (6R)-5,10-methylene-5,6,7,8-tetrahydrofolate + H2O = 2-dehydropantoate + (6S)-5,6,7,8-tetrahydrofolate. Its pathway is cofactor biosynthesis; (R)-pantothenate biosynthesis; (R)-pantoate from 3-methyl-2-oxobutanoate: step 1/2. Its function is as follows. Catalyzes the reversible reaction in which hydroxymethyl group from 5,10-methylenetetrahydrofolate is transferred onto alpha-ketoisovalerate to form ketopantoate. In Staphylococcus epidermidis (strain ATCC 35984 / DSM 28319 / BCRC 17069 / CCUG 31568 / BM 3577 / RP62A), this protein is 3-methyl-2-oxobutanoate hydroxymethyltransferase.